A 405-amino-acid polypeptide reads, in one-letter code: Sialic acid transporter NanX (405 aa).

Topologically, residues 1–20 (MATAWYKQVNPPQRKALFSA) are cytoplasmic. A helical membrane pass occupies residues 21–41 (WLGYVFDGFDFMMIFYILHII). The Periplasmic segment spans residues 42–53 (KADLGITDIQAT). The helical transmembrane segment at 54-74 (LIGTVAFIARPIGGGFFGAMA) threads the bilayer. The Cytoplasmic portion of the chain corresponds to 75–80 (DKYGRK). Residues 81–101 (PMMMWAIFIYSVGTGLSGIAT) form a helical membrane-spanning segment. Position 102 (Asn102) is a topological domain, periplasmic. The chain crosses the membrane as a helical span at residues 103-123 (LYMLAVCRFIVGLGMSGEYAC). The Cytoplasmic segment spans residues 124-139 (ASTYAVESWPKNLQSK). The chain crosses the membrane as a helical span at residues 140 to 160 (ASAFLVSGFSVGNIIAAQIIP). Topologically, residues 161–164 (QFAE) are periplasmic. Residues 165 to 185 (VYGWRNSFFIGLLPVLLVLWI) traverse the membrane as a helical segment. The Cytoplasmic segment spans residues 186 to 214 (RKSAPESQEWIEDKYKDKSTFLSVFRKPH). Residues 215–235 (LSISMIVFLVCFCLFGANWPI) form a helical membrane-spanning segment. Residues 236–250 (NGLLPSYLADNGVNT) are Periplasmic-facing. Residues 251 to 271 (VVISTLMTIAGLGTLTGTIFF) form a helical membrane-spanning segment. Topologically, residues 272-282 (GFVGDKIGVKK) are cytoplasmic. The chain crosses the membrane as a helical span at residues 283–303 (AFVVGLITSFIFLCPLFFISV). Topologically, residues 304 to 307 (KNSS) are periplasmic. The chain crosses the membrane as a helical span at residues 308-328 (LIGLCLFGLMFTNLGIAGLVP). Over 329–344 (KFIYDYFPTKLRGLGT) the chain is Cytoplasmic. Residues 345-365 (GLIYNLGATGGMAAPVLATYI) traverse the membrane as a helical segment. The Periplasmic segment spans residues 366 to 371 (SGYYGL). A helical transmembrane segment spans residues 372–392 (GVSLFIVTVAFSALLILLVGF). The Cytoplasmic segment spans residues 393–405 (DIPGKIYKLSVAK).

It belongs to the major facilitator superfamily. Sugar transporter (TC 2.A.1.1) family.

The protein resides in the cell inner membrane. Its function is as follows. Probably transports across the inner membrane the two dehydrated forms of N-acetylneuraminate (Neu5Ac), 2,7-anhydro-N-acetylneuraminate (2,7-AN) and 2-deoxy-2,3-didehydro-N-acetylneuraminate (2,3-EN). The sequence is that of Sialic acid transporter NanX from Escherichia coli (strain K12).